Reading from the N-terminus, the 977-residue chain is Probable RNA-dependent RNA polymerase 5 (977 aa).

Positions Glu-103 to Lys-122 are disordered.

The protein belongs to the RdRP family.

It carries out the reaction RNA(n) + a ribonucleoside 5'-triphosphate = RNA(n+1) + diphosphate. Its function is as follows. Probably involved in the RNA silencing pathway and required for the generation of small interfering RNAs (siRNAs). The protein is Probable RNA-dependent RNA polymerase 5 (RDR5) of Arabidopsis thaliana (Mouse-ear cress).